A 942-amino-acid polypeptide reads, in one-letter code: Chitin synthase 2 (942 aa).

A compositionally biased stretch (basic and acidic residues) spans 1-13 (MAYHYSHDSDRRQ). Residues 1 to 132 (MAYHYSHDSD…PSHTDYSDED (132 aa)) form a disordered region. A compositionally biased stretch (low complexity) spans 18-33 (YNYPSNYSNPSQYSIP). An N-linked (GlcNAc...) asparagine glycan is attached at asparagine 23. The segment covering 71–80 (PQPTASSMTS) has biased composition (polar residues). Asparagine 587 is a glycosylation site (N-linked (GlcNAc...) asparagine). Helical transmembrane passes span 590–610 (IFAA…GHGI), 625–645 (FNLL…FFLI), 663–683 (IFQV…VCSL), and 696–716 (FCIF…GWTV). Asparagine 736 carries N-linked (GlcNAc...) asparagine glycosylation. Transmembrane regions (helical) follow at residues 739–759 (FVQL…SSLL) and 770–790 (FVQY…YAMC). The N-linked (GlcNAc...) asparagine glycan is linked to asparagine 803. 2 helical membrane passes run 873–893 (VVLL…SSTF) and 916–936 (IFYA…LYLI).

The protein belongs to the chitin synthase family. Class III subfamily.

It localises to the cell membrane. It catalyses the reaction [(1-&gt;4)-N-acetyl-beta-D-glucosaminyl](n) + UDP-N-acetyl-alpha-D-glucosamine = [(1-&gt;4)-N-acetyl-beta-D-glucosaminyl](n+1) + UDP + H(+). In terms of biological role, polymerizes chitin, a structural polymer of the cell wall and septum, by transferring the sugar moiety of UDP-GlcNAc to the non-reducing end of the growing chitin polymer. This is Chitin synthase 2 from Cryptococcus neoformans var. grubii serotype A (strain H99 / ATCC 208821 / CBS 10515 / FGSC 9487) (Filobasidiella neoformans var. grubii).